A 178-amino-acid polypeptide reads, in one-letter code: Large ribosomal subunit protein uL6 (178 aa).

Belongs to the universal ribosomal protein uL6 family. As to quaternary structure, part of the 50S ribosomal subunit.

In terms of biological role, this protein binds to the 23S rRNA, and is important in its secondary structure. It is located near the subunit interface in the base of the L7/L12 stalk, and near the tRNA binding site of the peptidyltransferase center. This Helicobacter pylori (strain Shi470) protein is Large ribosomal subunit protein uL6.